A 207-amino-acid polypeptide reads, in one-letter code: Large ribosomal subunit protein uL4 (207 aa).

The disordered stretch occupies residues 56-75 (EVSGTTKKPFKQKGTGNARQ).

This sequence belongs to the universal ribosomal protein uL4 family. As to quaternary structure, part of the 50S ribosomal subunit.

In terms of biological role, one of the primary rRNA binding proteins, this protein initially binds near the 5'-end of the 23S rRNA. It is important during the early stages of 50S assembly. It makes multiple contacts with different domains of the 23S rRNA in the assembled 50S subunit and ribosome. Forms part of the polypeptide exit tunnel. The protein is Large ribosomal subunit protein uL4 of Rickettsia prowazekii (strain Madrid E).